The following is a 257-amino-acid chain: MRFDVVTLFPDMFGLVRDQGVTGRAHAQGLWALHAWNPRDFTQDVHRTVDDRPYGGGPGMVMMAAPLEAAVAAAQAARAAQGLQAAPVILLSPAGRRYDQAEATTLAAGTGAIFICGRYEGVDQRFIERCVTHELSLGDFVLSGGELAALAMMDAAVRLLPGVLNDGDSALQDSFNAALDGLLDSPHYTRPEVYEGVPVPQPLLSGHHANIARWRREQSLRLTASRRPELIERARGEGRLSKADERFLAGLAGERKS.

Residues Gly-117 and 137–142 (LGDFVL) each bind S-adenosyl-L-methionine.

It belongs to the RNA methyltransferase TrmD family. As to quaternary structure, homodimer.

It localises to the cytoplasm. It carries out the reaction guanosine(37) in tRNA + S-adenosyl-L-methionine = N(1)-methylguanosine(37) in tRNA + S-adenosyl-L-homocysteine + H(+). In terms of biological role, specifically methylates guanosine-37 in various tRNAs. The sequence is that of tRNA (guanine-N(1)-)-methyltransferase from Bordetella parapertussis (strain 12822 / ATCC BAA-587 / NCTC 13253).